We begin with the raw amino-acid sequence, 1423 residues long: DNA-directed RNA polymerase subunit beta' (1423 aa).

Zn(2+) is bound by residues Cys-70, Cys-72, Cys-85, and Cys-88. Mg(2+)-binding residues include Asp-461, Asp-463, and Asp-465. 4 residues coordinate Zn(2+): Cys-809, Cys-883, Cys-890, and Cys-893. The interval 1383–1423 (EEHAAELRQPVQADTGDDPLGAVVGESHGTDADAGDYLTEE) is disordered.

The protein belongs to the RNA polymerase beta' chain family. The RNAP catalytic core consists of 2 alpha, 1 beta, 1 beta' and 1 omega subunit. When a sigma factor is associated with the core the holoenzyme is formed, which can initiate transcription. The cofactor is Mg(2+). Zn(2+) is required as a cofactor.

The enzyme catalyses RNA(n) + a ribonucleoside 5'-triphosphate = RNA(n+1) + diphosphate. In terms of biological role, DNA-dependent RNA polymerase catalyzes the transcription of DNA into RNA using the four ribonucleoside triphosphates as substrates. This Rhizorhabdus wittichii (strain DSM 6014 / CCUG 31198 / JCM 15750 / NBRC 105917 / EY 4224 / RW1) (Sphingomonas wittichii) protein is DNA-directed RNA polymerase subunit beta'.